The chain runs to 286 residues: MSFHLKQVTRRFGKHTAVDSVDVEIPQGQMVGVIGRSGAGKSTLLRMINRLVDPSSGSIHFNDTEVSSLKGAALRAWQRDCAMIFQQFNLVPRLDVLTNVMLGRLNHRSTALSLFNIFSHEERLMAIAALERLGIEHVAMQAAGTLSGGQQQRVAIARALMQSPKMVLADEPIASLDPLNAKIVMDALRDINEREGITVITNLHTLDTARNYCERIIGMSQGRVVFDGTPAELTAAAVTEIYGTDSQGSGIDETMTSTSINIPGAQLAARPVQQSAGPEPLALAGL.

Positions F3 to S246 constitute an ABC transporter domain. Residue G35–S42 participates in ATP binding.

It belongs to the ABC transporter superfamily. Phosphonates importer (TC 3.A.1.9.1) family. In terms of assembly, the complex is composed of two ATP-binding proteins (PhnC), two transmembrane proteins (PhnE) and a solute-binding protein (PhnD).

Its subcellular location is the cell inner membrane. The catalysed reaction is phosphonate(out) + ATP + H2O = phosphonate(in) + ADP + phosphate + H(+). Its function is as follows. Part of the ABC transporter complex PhnCDE involved in phosphonates import. Responsible for energy coupling to the transport system. The protein is Phosphonates import ATP-binding protein PhnC of Agrobacterium fabrum (strain C58 / ATCC 33970) (Agrobacterium tumefaciens (strain C58)).